A 520-amino-acid chain; its full sequence is L-cysteine:1D-myo-inositol 2-amino-2-deoxy-alpha-D-glucopyranoside ligase (520 aa).

Residue Cys48 participates in Zn(2+) binding. L-cysteinyl-5'-AMP-binding positions include 48–51 (CGIT), Thr63, and 86–88 (NVT). Residues 50–60 (ITPYDSTHLGH) carry the 'HIGH' region motif. The 'ERGGDP' region motif lies at 192–197 (ERGGDP). Trp232 provides a ligand contact to L-cysteinyl-5'-AMP. Cys236 provides a ligand contact to Zn(2+). Residue 254–256 (GED) coordinates L-cysteinyl-5'-AMP. His261 contacts Zn(2+). Residue Ile288 participates in L-cysteinyl-5'-AMP binding. Residues 294–298 (KMSKS) carry the 'KMSKS' region motif.

It belongs to the class-I aminoacyl-tRNA synthetase family. MshC subfamily. As to quaternary structure, monomer. Zn(2+) serves as cofactor.

It catalyses the reaction 1D-myo-inositol 2-amino-2-deoxy-alpha-D-glucopyranoside + L-cysteine + ATP = 1D-myo-inositol 2-(L-cysteinylamino)-2-deoxy-alpha-D-glucopyranoside + AMP + diphosphate + H(+). Its function is as follows. Catalyzes the ATP-dependent condensation of GlcN-Ins and L-cysteine to form L-Cys-GlcN-Ins. This is L-cysteine:1D-myo-inositol 2-amino-2-deoxy-alpha-D-glucopyranoside ligase from Corynebacterium kroppenstedtii (strain DSM 44385 / JCM 11950 / CIP 105744 / CCUG 35717).